The following is a 428-amino-acid chain: GTPase Obg (428 aa).

Residues 1-158 enclose the Obg domain; it reads MFVDQVKIYV…RDVILELKVL (158 aa). One can recognise an OBG-type G domain in the interval 159–329; it reads ADVGLVGFPS…LLFEVANLIE (171 aa). Residues 165 to 172, 190 to 194, 212 to 215, 282 to 285, and 310 to 312 each bind GTP; these read GFPSVGKS, FTTIV, DLPG, NKMD, and SAV. Mg(2+)-binding residues include S172 and T192. Residues 350-428 enclose the OCT domain; it reads KFDTEGVKFE…ILEYEFEFID (79 aa).

It belongs to the TRAFAC class OBG-HflX-like GTPase superfamily. OBG GTPase family. As to quaternary structure, monomer. Mg(2+) is required as a cofactor.

The protein localises to the cytoplasm. Its function is as follows. An essential GTPase which binds GTP, GDP and possibly (p)ppGpp with moderate affinity, with high nucleotide exchange rates and a fairly low GTP hydrolysis rate. Plays a role in control of the cell cycle, stress response, ribosome biogenesis and in those bacteria that undergo differentiation, in morphogenesis control. The polypeptide is GTPase Obg (Bacillus cereus (strain B4264)).